A 337-amino-acid polypeptide reads, in one-letter code: 2-ketoarginine methyltransferase (337 aa).

This sequence belongs to the 2-ketoarginine methyltransferase family.

The enzyme catalyses 5-guanidino-2-oxopentanoate + S-adenosyl-L-methionine = (3R)-5-guanidino-3-methyl-2-oxopentanoate + S-adenosyl-L-homocysteine + H(+). It functions in the pathway antibiotic biosynthesis. Functionally, S-adenosyl-L-methionine-dependent methyltransferase involved in the formation of the rare amino acid 3-methylarginine (MeArg), which is incorporated into the peptidyl nucleoside antibiotic arginomycin. Transfers the methyl group from S-adenosyl-L-methionine into 5-guanidino-2-oxopentanoate acid to yield 5-guanidino-3-methyl-2-oxopentanoate, a precursor of MeArg. This Streptomyces arginensis protein is 2-ketoarginine methyltransferase.